An 84-amino-acid polypeptide reads, in one-letter code: Toxin Acra3 (84 aa).

Positions methionine 1–serine 17 are cleaved as a signal peptide. Positions arginine 19 to lysine 82 constitute an LCN-type CS-alpha/beta domain. Disulfide bonds link cysteine 30/cysteine 81, cysteine 34/cysteine 57, cysteine 43/cysteine 62, and cysteine 47/cysteine 64. Serine 83 is modified (serine amide).

It belongs to the long (4 C-C) scorpion toxin superfamily. Sodium channel inhibitor family. Beta subfamily. As to expression, expressed by the venom gland.

Its subcellular location is the secreted. Functionally, toxin with unknown target. In vivo, induces severe neurotoxic events in mice such as excitability and convulsions, leading to the death of the animals within a few minutes after injection. Exerts very strong cytotoxic effect on a mouse brain tumor cell line (BC3H1) (IC(50)=5 mg/ml). It exerts its effects by inducing a stronger necrosis than apoptosis in BC3H1 cells. This Androctonus crassicauda (Arabian fat-tailed scorpion) protein is Toxin Acra3.